Consider the following 231-residue polypeptide: Sec-independent protein translocase protein TatB (231 aa).

Residues 1–21 form a helical membrane-spanning segment; it reads MFDIGFSELLLFGVIALIVLG. The disordered stretch occupies residues 77–168; it reads MRREMAEMRG…SLKTDFNDNA (92 aa). Basic and acidic residues predominate over residues 101 to 111; the sequence is ASRDLVDDAKP. The segment covering 148 to 157 has biased composition (polar residues); sequence SEQPSAQGDN.

The protein belongs to the TatB family. As to quaternary structure, the Tat system comprises two distinct complexes: a TatABC complex, containing multiple copies of TatA, TatB and TatC subunits, and a separate TatA complex, containing only TatA subunits. Substrates initially bind to the TatABC complex, which probably triggers association of the separate TatA complex to form the active translocon.

The protein resides in the cell inner membrane. In terms of biological role, part of the twin-arginine translocation (Tat) system that transports large folded proteins containing a characteristic twin-arginine motif in their signal peptide across membranes. Together with TatC, TatB is part of a receptor directly interacting with Tat signal peptides. TatB may form an oligomeric binding site that transiently accommodates folded Tat precursor proteins before their translocation. The protein is Sec-independent protein translocase protein TatB of Psychrobacter cryohalolentis (strain ATCC BAA-1226 / DSM 17306 / VKM B-2378 / K5).